Reading from the N-terminus, the 942-residue chain is UvrABC system protein A (942 aa).

Glycine 32 to serine 39 is a binding site for ATP. A C4-type zinc finger spans residues cysteine 251–cysteine 278. ABC transporter domains follow at residues tryptophan 308–isoleucine 589 and glycine 609–lysine 937. Glycine 641–serine 648 contributes to the ATP binding site. Residues cysteine 740–cysteine 766 form a C4-type zinc finger.

This sequence belongs to the ABC transporter superfamily. UvrA family. As to quaternary structure, forms a heterotetramer with UvrB during the search for lesions.

It localises to the cytoplasm. Its function is as follows. The UvrABC repair system catalyzes the recognition and processing of DNA lesions. UvrA is an ATPase and a DNA-binding protein. A damage recognition complex composed of 2 UvrA and 2 UvrB subunits scans DNA for abnormalities. When the presence of a lesion has been verified by UvrB, the UvrA molecules dissociate. The protein is UvrABC system protein A of Streptococcus pyogenes serotype M3 (strain ATCC BAA-595 / MGAS315).